A 507-amino-acid chain; its full sequence is ATP synthase subunit alpha, chloroplastic (507 aa).

170-177 (GDRQTGKT) is a binding site for ATP. Disordered regions lie at residues 278–325 (PRRP…TQAG), 392–430 (EPEA…APLP), and 452–471 (GQVQ…NKPE). The span at 282–303 (PGREAHPGDVPHLHPRPPERAA) shows a compositional bias: basic and acidic residues. Over residues 305-322 (LSSQPGEGSTTASPTVET) the composition is skewed to polar residues.

Belongs to the ATPase alpha/beta chains family. In terms of assembly, F-type ATPases have 2 components, CF(1) - the catalytic core - and CF(0) - the membrane proton channel. CF(1) has five subunits: alpha(3), beta(3), gamma(1), delta(1), epsilon(1). CF(0) has four main subunits: a, b, b' and c.

The protein resides in the plastid. It localises to the chloroplast thylakoid membrane. The enzyme catalyses ATP + H2O + 4 H(+)(in) = ADP + phosphate + 5 H(+)(out). Its function is as follows. Produces ATP from ADP in the presence of a proton gradient across the membrane. The alpha chain is a regulatory subunit. This is ATP synthase subunit alpha, chloroplastic from Selaginella uncinata (Blue spike-moss).